The following is a 946-amino-acid chain: DNA primase (946 aa).

The disordered stretch occupies residues 596-626 (RDTEEDEDGKEDKNNVPDNGVFQKTTSSVDT). The segment covering 617–626 (FQKTTSSVDT) has biased composition (polar residues). The segment at 881–920 (CLNYTHRNPQETVQVFIDLRTEHSYALWASLWSRCFTKKC) adopts a CHC2-type zinc-finger fold.

It belongs to the herpesviridae DNA primase family. In terms of assembly, associates with the helicase and the primase-associated factor to form the helicase-primase factor.

It is found in the host nucleus. Its function is as follows. Essential component of the helicase/primase complex. Unwinds the DNA at the replication forks and generates single-stranded DNA for both leading and lagging strand synthesis. The primase initiates primer synthesis and thereby produces large amount of short RNA primers on the lagging strand that the polymerase elongates using dNTPs. This is DNA primase (UL70) from Human cytomegalovirus (strain AD169) (HHV-5).